A 249-amino-acid polypeptide reads, in one-letter code: Phosphate import ATP-binding protein PstB 2 (249 aa).

The ABC transporter domain occupies isoleucine 4 to isoleucine 244. Glycine 36–serine 43 lines the ATP pocket.

It belongs to the ABC transporter superfamily. Phosphate importer (TC 3.A.1.7) family. In terms of assembly, the complex is composed of two ATP-binding proteins (PstB), two transmembrane proteins (PstC and PstA) and a solute-binding protein (PstS).

The protein localises to the cell membrane. The catalysed reaction is phosphate(out) + ATP + H2O = ADP + 2 phosphate(in) + H(+). Its function is as follows. Part of the ABC transporter complex PstSACB involved in phosphate import. Responsible for energy coupling to the transport system. In Caldanaerobacter subterraneus subsp. tengcongensis (strain DSM 15242 / JCM 11007 / NBRC 100824 / MB4) (Thermoanaerobacter tengcongensis), this protein is Phosphate import ATP-binding protein PstB 2.